The sequence spans 435 residues: ATP-dependent protease ATPase subunit HslU (435 aa).

ATP contacts are provided by residues I18, 60–65, D248, E313, and R385; that span reads GVGKTE.

Belongs to the ClpX chaperone family. HslU subfamily. As to quaternary structure, a double ring-shaped homohexamer of HslV is capped on each side by a ring-shaped HslU homohexamer. The assembly of the HslU/HslV complex is dependent on binding of ATP.

The protein resides in the cytoplasm. Its function is as follows. ATPase subunit of a proteasome-like degradation complex; this subunit has chaperone activity. The binding of ATP and its subsequent hydrolysis by HslU are essential for unfolding of protein substrates subsequently hydrolyzed by HslV. HslU recognizes the N-terminal part of its protein substrates and unfolds these before they are guided to HslV for hydrolysis. This chain is ATP-dependent protease ATPase subunit HslU, found in Rhizobium meliloti (strain 1021) (Ensifer meliloti).